Here is a 212-residue protein sequence, read N- to C-terminus: Imidazole glycerol phosphate synthase subunit HisH (212 aa).

One can recognise a Glutamine amidotransferase type-1 domain in the interval Thr3 to Trp212. Catalysis depends on Cys81, which acts as the Nucleophile. Residues His190 and Glu192 contribute to the active site.

As to quaternary structure, heterodimer of HisH and HisF.

Its subcellular location is the cytoplasm. It carries out the reaction 5-[(5-phospho-1-deoxy-D-ribulos-1-ylimino)methylamino]-1-(5-phospho-beta-D-ribosyl)imidazole-4-carboxamide + L-glutamine = D-erythro-1-(imidazol-4-yl)glycerol 3-phosphate + 5-amino-1-(5-phospho-beta-D-ribosyl)imidazole-4-carboxamide + L-glutamate + H(+). The enzyme catalyses L-glutamine + H2O = L-glutamate + NH4(+). Its pathway is amino-acid biosynthesis; L-histidine biosynthesis; L-histidine from 5-phospho-alpha-D-ribose 1-diphosphate: step 5/9. Its function is as follows. IGPS catalyzes the conversion of PRFAR and glutamine to IGP, AICAR and glutamate. The HisH subunit catalyzes the hydrolysis of glutamine to glutamate and ammonia as part of the synthesis of IGP and AICAR. The resulting ammonia molecule is channeled to the active site of HisF. The sequence is that of Imidazole glycerol phosphate synthase subunit HisH from Pseudomonas syringae pv. syringae (strain B728a).